Reading from the N-terminus, the 530-residue chain is Negative elongation factor A (530 aa).

The region spanning 89-248 (WVLMVADILK…TPIPPSRTPL (160 aa)) is the HDAg domain. The tract at residues 125 to 188 (REKVSECEAS…LQKSTETAQQ (64 aa)) is NELF-C/D-binding. The residue at position 157 (threonine 157) is a Phosphothreonine. An RNAPII-binding region spans residues 189–248 (LKRSAGVPFHAKGRGLLRKMDTTTPLKGIPKQAPFRSPTTPSVFSPSGNRTPIPPSRTPL). 3 disordered regions span residues 213 to 248 (PLKG…RTPL), 266 to 296 (GAGR…VENA), and 312 to 409 (SLNS…TAQT). Residues serine 225 and serine 233 each carry the phosphoserine modification. Residues 225–238 (SPTTPSVFSPSGNR) are compositionally biased toward polar residues. The residue at position 277 (threonine 277) is a Phosphothreonine. Positions 277–291 (TLDTEVVEKPTKEET) are enriched in basic and acidic residues. Residues 315-341 (SEPTLPSTSYLPSTPSVVPASSYIPSS) are compositionally biased toward low complexity. Residue serine 363 is modified to Phosphoserine.

The protein belongs to the NELF-A family. As to quaternary structure, the NELF complex is composed of NELFA, NELFB, NELFCD and NELFE; NELFA and NELFCD form a stable subcomplex that binds to the N-terminus of NELFB. In vitro, the NELFA:NELFCD subcomplex binds to ssDNA and ssRNA in a sequence- and structure-dependent manner. Interacts with the RNA polymerase II complex when it is not phosphorylated by P-TEFb. Interacts with NELFB. Ubiquitous. Expressed in brain, heart, spleen, lung, liver, muscle, kidney and testis. Already expressed in 7 dpc embryos.

It is found in the nucleus. Essential component of the NELF complex, a complex that negatively regulates the elongation of transcription by RNA polymerase II. The NELF complex, which acts via an association with the DSIF complex and causes transcriptional pausing, is counteracted by the P-TEFb kinase complex. This is Negative elongation factor A (Nelfa) from Mus musculus (Mouse).